The chain runs to 616 residues: Dihydroxy-acid dehydratase (616 aa).

Residue D81 coordinates Mg(2+). C122 is a [2Fe-2S] cluster binding site. The Mg(2+) site is built by D123 and K124. K124 is subject to N6-carboxylysine. C195 provides a ligand contact to [2Fe-2S] cluster. E491 contributes to the Mg(2+) binding site. S517 acts as the Proton acceptor in catalysis.

Belongs to the IlvD/Edd family. Homodimer. It depends on [2Fe-2S] cluster as a cofactor. The cofactor is Mg(2+).

It catalyses the reaction (2R)-2,3-dihydroxy-3-methylbutanoate = 3-methyl-2-oxobutanoate + H2O. The catalysed reaction is (2R,3R)-2,3-dihydroxy-3-methylpentanoate = (S)-3-methyl-2-oxopentanoate + H2O. It functions in the pathway amino-acid biosynthesis; L-isoleucine biosynthesis; L-isoleucine from 2-oxobutanoate: step 3/4. Its pathway is amino-acid biosynthesis; L-valine biosynthesis; L-valine from pyruvate: step 3/4. Functions in the biosynthesis of branched-chain amino acids. Catalyzes the dehydration of (2R,3R)-2,3-dihydroxy-3-methylpentanoate (2,3-dihydroxy-3-methylvalerate) into 2-oxo-3-methylpentanoate (2-oxo-3-methylvalerate) and of (2R)-2,3-dihydroxy-3-methylbutanoate (2,3-dihydroxyisovalerate) into 2-oxo-3-methylbutanoate (2-oxoisovalerate), the penultimate precursor to L-isoleucine and L-valine, respectively. This chain is Dihydroxy-acid dehydratase, found in Yersinia pseudotuberculosis serotype I (strain IP32953).